The following is a 323-amino-acid chain: UPF0200/UPF0201 protein AF_1395 (323 aa).

The UPF0200 stretch occupies residues 1–185 (MVLEMKVIAF…EKIRQILLKL (185 aa)). 12–19 (GYPLSGKS) lines the ATP pocket. The tract at residues 186–323 (AKNVEIEIRT…GRPVKEIDKL (138 aa)) is UPF0201.

The protein in the N-terminal section; belongs to the UPF0200 family. In the C-terminal section; belongs to the UPF0201 family.

This Archaeoglobus fulgidus (strain ATCC 49558 / DSM 4304 / JCM 9628 / NBRC 100126 / VC-16) protein is UPF0200/UPF0201 protein AF_1395.